Reading from the N-terminus, the 273-residue chain is Dermonecrotic toxin LarSicTox-alphaIB1aii (273 aa).

His-5 is a catalytic residue. Mg(2+) contacts are provided by Glu-25 and Asp-27. His-41 (nucleophile) is an active-site residue. Cystine bridges form between Cys-45–Cys-51 and Cys-47–Cys-190. Asp-85 lines the Mg(2+) pocket. Asn-250 carries an N-linked (GlcNAc...) asparagine glycan.

Belongs to the arthropod phospholipase D family. Class II subfamily. Requires Mg(2+) as cofactor. Expressed by the venom gland.

The protein localises to the secreted. It catalyses the reaction an N-(acyl)-sphingosylphosphocholine = an N-(acyl)-sphingosyl-1,3-cyclic phosphate + choline. It carries out the reaction an N-(acyl)-sphingosylphosphoethanolamine = an N-(acyl)-sphingosyl-1,3-cyclic phosphate + ethanolamine. The catalysed reaction is a 1-acyl-sn-glycero-3-phosphocholine = a 1-acyl-sn-glycero-2,3-cyclic phosphate + choline. The enzyme catalyses a 1-acyl-sn-glycero-3-phosphoethanolamine = a 1-acyl-sn-glycero-2,3-cyclic phosphate + ethanolamine. Its function is as follows. Dermonecrotic toxins cleave the phosphodiester linkage between the phosphate and headgroup of certain phospholipids (sphingolipid and lysolipid substrates), forming an alcohol (often choline) and a cyclic phosphate. This toxin acts on sphingomyelin (SM). It may also act on ceramide phosphoethanolamine (CPE), lysophosphatidylcholine (LPC) and lysophosphatidylethanolamine (LPE), but not on lysophosphatidylserine (LPS), and lysophosphatidylglycerol (LPG). It acts by transphosphatidylation, releasing exclusively cyclic phosphate products as second products. Induces dermonecrosis, hemolysis, increased vascular permeability, edema, inflammatory response, and platelet aggregation. The sequence is that of Dermonecrotic toxin LarSicTox-alphaIB1aii from Loxosceles arizonica (Arizona brown spider).